The primary structure comprises 170 residues: Large ribosomal subunit protein bL9 (170 aa).

A disordered region spans residues 149–170; the sequence is RTEEADAEESAAEEPAVEEAAE. The segment covering 153–170 has biased composition (acidic residues); the sequence is ADAEESAAEEPAVEEAAE.

It belongs to the bacterial ribosomal protein bL9 family.

Functionally, binds to the 23S rRNA. The chain is Large ribosomal subunit protein bL9 from Oleidesulfovibrio alaskensis (strain ATCC BAA-1058 / DSM 17464 / G20) (Desulfovibrio alaskensis).